The chain runs to 874 residues: Alanine--tRNA ligase (874 aa).

Residues histidine 562, histidine 566, cysteine 664, and histidine 668 each coordinate Zn(2+).

Belongs to the class-II aminoacyl-tRNA synthetase family. The cofactor is Zn(2+).

It localises to the cytoplasm. It catalyses the reaction tRNA(Ala) + L-alanine + ATP = L-alanyl-tRNA(Ala) + AMP + diphosphate. In terms of biological role, catalyzes the attachment of alanine to tRNA(Ala) in a two-step reaction: alanine is first activated by ATP to form Ala-AMP and then transferred to the acceptor end of tRNA(Ala). Also edits incorrectly charged Ser-tRNA(Ala) and Gly-tRNA(Ala) via its editing domain. This chain is Alanine--tRNA ligase, found in Shewanella sediminis (strain HAW-EB3).